Reading from the N-terminus, the 466-residue chain is Small RNA degrading nuclease 2 (466 aa).

One can recognise an Exonuclease domain in the interval 142-298 (MIAIDCEMVL…HDAEAAMKLV (157 aa)). Positions 426 to 466 (EENNASSKKRKRENHSKGTRDRRRCKPLSRRKQRSNVKRRR) are disordered. Positions 445–466 (RDRRRCKPLSRRKQRSNVKRRR) are enriched in basic residues.

This sequence belongs to the REXO1/REXO3 family.

The protein localises to the nucleus. In terms of biological role, 3'-5' exonuclease degrading single-stranded small RNAs. This Arabidopsis thaliana (Mouse-ear cress) protein is Small RNA degrading nuclease 2 (SDN2).